Consider the following 362-residue polypeptide: Tyrosyl-DNA phosphodiesterase 2 (362 aa).

The residue at position 1 (M1) is an N-acetylmethionine. Positions 1–20 (MELGSCLEGGREAAEEEGEP) are disordered. Residues K23 and K82 each participate in a glycyl lysine isopeptide (Lys-Gly) (interchain with G-Cter in SUMO2) cross-link. Residues 87–109 (LTNEETTDSTTSKISPSEDTQQE) form a disordered region. Phosphothreonine; by ACVR1B occurs at positions 88 and 92. Residues 94-109 (DSTTSKISPSEDTQQE) show a composition bias toward polar residues. S95 bears the Phosphoserine mark. The tract at residues 120–124 (NIDGL) is interaction with 5' end of substrate DNA. Positions 122 and 152 each coordinate Mg(2+). The interval 226–231 (HLESTR) is interaction with 5' end of substrate DNA. D262 acts as the Proton donor/acceptor in catalysis. The interval 264-266 (NLR) is interaction with 5' end of substrate DNA.

The protein belongs to the CCR4/nocturin family. In terms of assembly, interacts with TRAF2, TRAF3, TRAF5, TRAF6, TNFRSF8/CD30, TNFRSF5/CD40, TNFRSF1B/TNF-R75, ETS1, ETS2, FLI1, SMAD3 and ACVR1B/ALK4. (Microbial infection) Interacts with Hantaan hantavirus nucleoprotein. As to quaternary structure, (Microbial infection) Interacts with Seoul hantavirus nucleoprotein. Mg(2+) is required as a cofactor. Requires Mn(2+) as cofactor. Post-translationally, ubiquitinated by TRAF6. In terms of tissue distribution, widely expressed. Highly expressed in various brain regions, including the frontal and occipital lobes, the hippocampus, the striatum and the cerebellum.

It is found in the nucleus. Its subcellular location is the PML body. The protein localises to the nucleolus. The protein resides in the cytoplasm. In terms of biological role, DNA repair enzyme that can remove a variety of covalent adducts from DNA through hydrolysis of a 5'-phosphodiester bond, giving rise to DNA with a free 5' phosphate. Catalyzes the hydrolysis of dead-end complexes between DNA and the topoisomerase 2 (TOP2) active site tyrosine residue. The 5'-tyrosyl DNA phosphodiesterase activity can enable the repair of TOP2-induced DNA double-strand breaks/DSBs without the need for nuclease activity, creating a 'clean' DSB with 5'-phosphate termini that are ready for ligation. Thereby, protects the transcription of many genes involved in neurological development and maintenance from the abortive activity of TOP2. Hydrolyzes 5'-phosphoglycolates on protruding 5' ends on DSBs due to DNA damage by radiation and free radicals. Has preference for single-stranded DNA or duplex DNA with a 4 base pair overhang as substrate. Acts as a regulator of ribosome biogenesis following stress. Also has 3'-tyrosyl DNA phosphodiesterase activity, but less efficiently and much slower than TDP1. Constitutes the major if not only 5'-tyrosyl-DNA phosphodiesterase in cells. Also acts as an adapter by participating in the specific activation of MAP3K7/TAK1 in response to TGF-beta: associates with components of the TGF-beta receptor-TRAF6-TAK1 signaling module and promotes their ubiquitination dependent complex formation. Involved in non-canonical TGF-beta induced signaling routes. May also act as a negative regulator of ETS1 and may inhibit NF-kappa-B activation. Functionally, (Microbial infection) Used by picornaviruses to remove the small polypeptide, VPg (virus Protein genome-linked, the primer for viral RNA synthesis), from the genomic RNA of the virus. Acts as a 5'-tyrosyl RNA phosphodiesterase and cleaves the covalent VPg-Tyr-RNA bond. This cleavage would play a role in viral replication and occur in viral replication vesicles, but would not act on viral mRNA. This Homo sapiens (Human) protein is Tyrosyl-DNA phosphodiesterase 2.